A 466-amino-acid polypeptide reads, in one-letter code: Ribulose bisphosphate carboxylase large chain (466 aa).

Lys5 carries the N6,N6,N6-trimethyllysine modification. Residues Asn114 and Thr164 each coordinate substrate. The Proton acceptor role is filled by Lys166. Lys168 contributes to the substrate binding site. 3 residues coordinate Mg(2+): Lys192, Asp194, and Glu195. Lys192 is modified (N6-carboxylysine). The Proton acceptor role is filled by His285. The substrate site is built by Arg286, His318, and Ser370.

Belongs to the RuBisCO large chain family. Type I subfamily. As to quaternary structure, heterohexadecamer of 8 large chains and 8 small chains; disulfide-linked. The disulfide link is formed within the large subunit homodimers. Mg(2+) is required as a cofactor. In terms of processing, the disulfide bond which can form in the large chain dimeric partners within the hexadecamer appears to be associated with oxidative stress and protein turnover.

It localises to the plastid. The protein resides in the chloroplast. The enzyme catalyses 2 (2R)-3-phosphoglycerate + 2 H(+) = D-ribulose 1,5-bisphosphate + CO2 + H2O. It catalyses the reaction D-ribulose 1,5-bisphosphate + O2 = 2-phosphoglycolate + (2R)-3-phosphoglycerate + 2 H(+). Its function is as follows. RuBisCO catalyzes two reactions: the carboxylation of D-ribulose 1,5-bisphosphate, the primary event in carbon dioxide fixation, as well as the oxidative fragmentation of the pentose substrate in the photorespiration process. Both reactions occur simultaneously and in competition at the same active site. The protein is Ribulose bisphosphate carboxylase large chain of Saururus cernuus (Lizard's tail).